A 359-amino-acid polypeptide reads, in one-letter code: 3-dehydroquinate synthase (359 aa).

NAD(+)-binding positions include 71–76 (DGEAYK), 105–109 (GVIGD), 129–130 (TT), Lys142, and Lys151. Residues Glu184, His247, and His264 each coordinate Zn(2+).

Belongs to the sugar phosphate cyclases superfamily. Dehydroquinate synthase family. The cofactor is Co(2+). Requires Zn(2+) as cofactor. NAD(+) is required as a cofactor.

The protein resides in the cytoplasm. It carries out the reaction 7-phospho-2-dehydro-3-deoxy-D-arabino-heptonate = 3-dehydroquinate + phosphate. It functions in the pathway metabolic intermediate biosynthesis; chorismate biosynthesis; chorismate from D-erythrose 4-phosphate and phosphoenolpyruvate: step 2/7. Catalyzes the conversion of 3-deoxy-D-arabino-heptulosonate 7-phosphate (DAHP) to dehydroquinate (DHQ). This is 3-dehydroquinate synthase from Burkholderia mallei (strain NCTC 10247).